We begin with the raw amino-acid sequence, 130 residues long: Sirohydrochlorin cobaltochelatase (130 aa).

The active-site Proton acceptor is the His12. His12 contacts Co(2+). His12 contacts Ni(2+). Substrate contacts are provided by residues Glu48 and 73–78 (LASGVH). Residue His78 participates in Co(2+) binding. Residue His78 participates in Ni(2+) binding.

The protein belongs to the CbiX family. CbiXS subfamily. As to quaternary structure, homotetramer; dimer of dimers.

It catalyses the reaction Co-sirohydrochlorin + 2 H(+) = sirohydrochlorin + Co(2+). The catalysed reaction is Ni-sirohydrochlorin + 2 H(+) = sirohydrochlorin + Ni(2+). It participates in cofactor biosynthesis; adenosylcobalamin biosynthesis; cob(II)yrinate a,c-diamide from sirohydrochlorin (anaerobic route): step 1/10. Functionally, catalyzes the insertion of Co(2+) into sirohydrochlorin as part of the anaerobic pathway to cobalamin biosynthesis (Potential). Involved in the biosynthesis of the unique nickel-containing tetrapyrrole coenzyme F430, the prosthetic group of methyl-coenzyme M reductase (MCR), which plays a key role in methanogenesis and anaerobic methane oxidation. Catalyzes the insertion of Ni(2+) into sirohydrochlorin to yield Ni-sirohydrochlorin. The protein is Sirohydrochlorin cobaltochelatase of Methanosarcina acetivorans (strain ATCC 35395 / DSM 2834 / JCM 12185 / C2A).